Reading from the N-terminus, the 682-residue chain is Potassium-transporting ATPase ATP-binding subunit (682 aa).

4 consecutive transmembrane segments (helical) span residues 44-64, 66-86, 233-253, and 257-277; these read VMAVVMGGTLLAAVITASGHG, AGFGWAVTAILFVTVLFGNFA, LTFLIVVASLPAIAGFVGVTL, and LLIALLVCLIPTTIGGLLPAI. Asp310 serves as the catalytic 4-aspartylphosphate intermediate. ATP is bound by residues Asp347, Glu351, 377–384, and Lys395; that span reads FTAQTRMS. Residues Asp518 and Asp522 each contribute to the Mg(2+) site. Transmembrane regions (helical) follow at residues 588-608, 616-636, and 658-678; these read FAILPALFAAAIPSMAALNVM, AVLAALIFNALIIPALIPLAL, and GLGGVLLPFAAIKLIDLALVA.

It belongs to the cation transport ATPase (P-type) (TC 3.A.3) family. Type IA subfamily. In terms of assembly, the system is composed of three essential subunits: KdpA, KdpB and KdpC.

The protein resides in the cell inner membrane. The enzyme catalyses K(+)(out) + ATP + H2O = K(+)(in) + ADP + phosphate + H(+). Functionally, part of the high-affinity ATP-driven potassium transport (or Kdp) system, which catalyzes the hydrolysis of ATP coupled with the electrogenic transport of potassium into the cytoplasm. This subunit is responsible for energy coupling to the transport system and for the release of the potassium ions to the cytoplasm. In Xanthomonas campestris pv. campestris (strain ATCC 33913 / DSM 3586 / NCPPB 528 / LMG 568 / P 25), this protein is Potassium-transporting ATPase ATP-binding subunit.